The sequence spans 572 residues: Probable transporter MCH1 (572 aa).

Over residues 1–29 (MSSSAPDDTQASRLDADQISTRSSSYASD) the composition is skewed to polar residues. Positions 1–39 (MSSSAPDDTQASRLDADQISTRSSSYASDNDTDSTETRI) are disordered. N-linked (GlcNAc...) asparagine glycosylation is present at asparagine 30. The next 10 membrane-spanning stretches (helical) occupy residues 50-70 (LLAFISANIIALACGSIVVFS), 89-109 (AVAISGSVALYLPISGVGYIC), 116-136 (PLALTGGILFGSGYGLAAGVY), 159-179 (FLMLSFVFVGVATCCLYMAAV), 193-213 (GLALATPITCFGLSPMWLSQA), 232-252 (VFRFFLFLAALTFFMGILGTF), 335-355 (LAFLLIVGPGEAFINNLGTII), 426-446 (FMAFFASMLSIGLLILASGLV), 459-479 (LVGAGYGAIFSLTPLMVTIIW), and 488-508 (YGLIGMLPAAGSTFWGLVYSA). N-linked (GlcNAc...) asparagine glycosylation occurs at asparagine 515. The chain crosses the membrane as a helical span at residues 539-559 (PTYWAETITVWIAVGLLLWAW).

This sequence belongs to the major facilitator superfamily.

The protein resides in the vacuole membrane. Functionally, probable transporter. The sequence is that of Probable transporter MCH1 (MCH1) from Gibberella zeae (strain ATCC MYA-4620 / CBS 123657 / FGSC 9075 / NRRL 31084 / PH-1) (Wheat head blight fungus).